The primary structure comprises 67 residues: Small ribosomal subunit protein bS21 (67 aa).

This sequence belongs to the bacterial ribosomal protein bS21 family.

This is Small ribosomal subunit protein bS21 from Granulibacter bethesdensis (strain ATCC BAA-1260 / CGDNIH1).